A 31-amino-acid chain; its full sequence is Circulin-B (31 aa).

Positions 1 to 31 (GVIPCGESCVFIPCISTLLGCSCKNKVCYRN) form a cross-link, cyclopeptide (Gly-Asn). 3 disulfides stabilise this stretch: Cys5–Cys21, Cys9–Cys23, and Cys14–Cys28.

This is a cyclic peptide.

Probably participates in a plant defense mechanism. Has antibiotic activity. Inhibits the cytopathic effects and replication of the human immunodeficiency virus. Active against both Gram-positive and Gram-negative bacteria. This chain is Circulin-B, found in Chassalia parviflora.